The chain runs to 187 residues: Adenine phosphoribosyltransferase 1 (187 aa).

The residue at position 68 (serine 68) is a Phosphoserine. 133–137 (ATGGS) is a binding site for AMP.

This sequence belongs to the purine/pyrimidine phosphoribosyltransferase family. In terms of assembly, homodimer. The cofactor is Mg(2+).

Its subcellular location is the cytoplasm. It localises to the nucleus. It catalyses the reaction AMP + diphosphate = 5-phospho-alpha-D-ribose 1-diphosphate + adenine. It participates in purine metabolism; AMP biosynthesis via salvage pathway; AMP from adenine: step 1/1. Its function is as follows. Catalyzes a salvage reaction resulting in the formation of AMP, that is energically less costly than de novo synthesis. The sequence is that of Adenine phosphoribosyltransferase 1 from Saccharomyces cerevisiae (strain ATCC 204508 / S288c) (Baker's yeast).